The following is a 403-amino-acid chain: S-adenosylmethionine synthase (403 aa).

His-14 lines the ATP pocket. Asp-16 contacts Mg(2+). Residue Glu-42 coordinates K(+). Residues Glu-55 and Gln-99 each coordinate L-methionine. The flexible loop stretch occupies residues 99–109; sequence QSPEIAEGVDH. Residues 180–182, 250–251, Asp-259, 265–266, Ala-282, and Lys-286 each bind ATP; these read DAK, RF, and RK. Position 259 (Asp-259) interacts with L-methionine. Lys-290 is an L-methionine binding site.

This sequence belongs to the AdoMet synthase family. In terms of assembly, homotetramer; dimer of dimers. The cofactor is Mg(2+). K(+) is required as a cofactor.

Its subcellular location is the cytoplasm. It carries out the reaction L-methionine + ATP + H2O = S-adenosyl-L-methionine + phosphate + diphosphate. Its pathway is amino-acid biosynthesis; S-adenosyl-L-methionine biosynthesis; S-adenosyl-L-methionine from L-methionine: step 1/1. Its function is as follows. Catalyzes the formation of S-adenosylmethionine (AdoMet) from methionine and ATP. The overall synthetic reaction is composed of two sequential steps, AdoMet formation and the subsequent tripolyphosphate hydrolysis which occurs prior to release of AdoMet from the enzyme. The polypeptide is S-adenosylmethionine synthase (Deinococcus deserti (strain DSM 17065 / CIP 109153 / LMG 22923 / VCD115)).